The following is a 529-amino-acid chain: Bifunctional purine biosynthesis protein PurH (529 aa).

Positions 1–148 (MQQRRPVRRA…KNHKDVAIVV (148 aa)) constitute an MGS-like domain.

The protein belongs to the PurH family.

The catalysed reaction is (6R)-10-formyltetrahydrofolate + 5-amino-1-(5-phospho-beta-D-ribosyl)imidazole-4-carboxamide = 5-formamido-1-(5-phospho-D-ribosyl)imidazole-4-carboxamide + (6S)-5,6,7,8-tetrahydrofolate. The enzyme catalyses IMP + H2O = 5-formamido-1-(5-phospho-D-ribosyl)imidazole-4-carboxamide. It participates in purine metabolism; IMP biosynthesis via de novo pathway; 5-formamido-1-(5-phospho-D-ribosyl)imidazole-4-carboxamide from 5-amino-1-(5-phospho-D-ribosyl)imidazole-4-carboxamide (10-formyl THF route): step 1/1. The protein operates within purine metabolism; IMP biosynthesis via de novo pathway; IMP from 5-formamido-1-(5-phospho-D-ribosyl)imidazole-4-carboxamide: step 1/1. The protein is Bifunctional purine biosynthesis protein PurH of Citrobacter koseri (strain ATCC BAA-895 / CDC 4225-83 / SGSC4696).